The chain runs to 513 residues: Steroid (22S)-hydroxylase (513 aa).

A helical transmembrane segment spans residues 8 to 28 (TLLPLLLLPSLLSLLLFLILL). Positions 252–277 (DIKEEDQEEEEVKTEDEAEMSKSDHV) are disordered. A compositionally biased stretch (acidic residues) spans 254–269 (KEEDQEEEEVKTEDEA). Residue C462 participates in heme binding.

Belongs to the cytochrome P450 family. Heme serves as cofactor. In terms of tissue distribution, expressed in stems, leaves, shoots, and roots, with a higher expression in siliques and apical shoots.

The protein localises to the membrane. It carries out the reaction a C27-steroid + reduced [NADPH--hemoprotein reductase] + O2 = a (22S)-22-hydroxy C27-steroid + oxidized [NADPH--hemoprotein reductase] + H2O + H(+). It catalyses the reaction a C28-steroid + reduced [NADPH--hemoprotein reductase] + O2 = a (22S)-22-hydroxy C28-steroid + oxidized [NADPH--hemoprotein reductase] + H2O + H(+). The enzyme catalyses a C29-steroid + reduced [NADPH--hemoprotein reductase] + O2 = a (22S)-22-hydroxy C29-steroid + oxidized [NADPH--hemoprotein reductase] + H2O + H(+). The catalysed reaction is cholesterol + reduced [NADPH--hemoprotein reductase] + O2 = (22S)-22-hydroxycholesterol + oxidized [NADPH--hemoprotein reductase] + H2O + H(+). It carries out the reaction cholestanol + reduced [NADPH--hemoprotein reductase] + O2 = (22S)-22-hydroxycholestanol + oxidized [NADPH--hemoprotein reductase] + H2O + H(+). It catalyses the reaction campestanol + reduced [NADPH--hemoprotein reductase] + O2 = 6-deoxycathasterone + oxidized [NADPH--hemoprotein reductase] + H2O + H(+). The enzyme catalyses campesterol + reduced [NADPH--hemoprotein reductase] + O2 = (22S)-22-hydroxycampesterol + oxidized [NADPH--hemoprotein reductase] + H2O + H(+). The catalysed reaction is 6-oxocampestanol + reduced [NADPH--hemoprotein reductase] + O2 = cathasterone + oxidized [NADPH--hemoprotein reductase] + H2O + H(+). It carries out the reaction sitosterol + reduced [NADPH--hemoprotein reductase] + O2 = (22S)-22-hydroxysitosterol + oxidized [NADPH--hemoprotein reductase] + H2O + H(+). The protein operates within plant hormone biosynthesis; brassinosteroid biosynthesis. Its function is as follows. Catalyzes the C22-alpha-hydroxylation step in brassinosteroids biosynthesis. Converts campesterol (CR) to (22S)-22-hydroxycampesterol (22-OHCR, 22-hydroxyCR), campestanol (CN) to 6-deoxycathasterone (6-deoxoCT), and 6-oxocampestanol (6-oxoCN) to cathasterone (CT). Can also use cholesterol and cholestanol as substrates. The protein is Steroid (22S)-hydroxylase of Arabidopsis thaliana (Mouse-ear cress).